The sequence spans 382 residues: Regulatory protein RapC (382 aa).

TPR repeat units lie at residues Y102–H138, A149–I182, I183–E216, G223–S256, and P263–T296.

The protein belongs to the Rap family. As to quaternary structure, homodimer. Interacts specifically with the C-terminal DNA-binding domain of ComA. Interacts with CSF.

The protein resides in the cytoplasm. Inhibited by the competence and sporulation stimulating factor (CSF), encoded by phrC, which prevents RapC-ComA interaction. Functionally, involved in the regulation of genetic competence development. Inhibits the activity of ComA, a transcriptional factor that regulates the development of genetic competence. Acts by binding to ComA, independently of its phosphorylation state, leading to the inhibition of ComA DNA-binding activity. Does not dephosphorylate phospho-ComA and does not affect the phosphorylation level of the ComP-ComA system. The polypeptide is Regulatory protein RapC (rapC) (Bacillus subtilis (strain 168)).